Here is a 596-residue protein sequence, read N- to C-terminus: Inactive metallocarboxypeptidase ecm14 (596 aa).

Positions 1-26 (MSQSHSILSSLILLVAIIFCVPHVIA) are cleaved as a signal peptide. Positions 27-190 (VPWTTDGHAQ…SYPSMAYADA (164 aa)) are excised as a propeptide. Residue N114 is glycosylated (N-linked (GlcNAc...) asparagine). One can recognise a Peptidase M14 domain in the interval 220–540 (NYQPLSVIIP…NVIKYFGDFL (321 aa)). Zn(2+) is bound by residues H285 and E288. Residues 285–288 (HARE), R343, and 360–361 (DR) each bind substrate. A disulfide bond links C354 and C376. N-linked (GlcNAc...) asparagine glycosylation is present at N400. Residue H416 participates in Zn(2+) binding. Residue 417-418 (SY) coordinates substrate.

This sequence belongs to the peptidase M14 family. It depends on Zn(2+) as a cofactor.

It localises to the vacuole. Its subcellular location is the secreted. Inactive carboxypeptidase that may play a role in cell wall organization and biogenesis. This Sclerotinia sclerotiorum (strain ATCC 18683 / 1980 / Ss-1) (White mold) protein is Inactive metallocarboxypeptidase ecm14 (ecm14).